The sequence spans 272 residues: Tryptophan synthase alpha chain (272 aa).

Residues Glu49 and Glu60 each act as proton acceptor in the active site.

The protein belongs to the TrpA family. In terms of assembly, tetramer of two alpha and two beta chains.

The enzyme catalyses (1S,2R)-1-C-(indol-3-yl)glycerol 3-phosphate + L-serine = D-glyceraldehyde 3-phosphate + L-tryptophan + H2O. It participates in amino-acid biosynthesis; L-tryptophan biosynthesis; L-tryptophan from chorismate: step 5/5. Its function is as follows. The alpha subunit is responsible for the aldol cleavage of indoleglycerol phosphate to indole and glyceraldehyde 3-phosphate. This chain is Tryptophan synthase alpha chain, found in Legionella pneumophila (strain Paris).